The following is a 318-amino-acid chain: Ribosomal RNA small subunit methyltransferase H (318 aa).

S-adenosyl-L-methionine contacts are provided by residues 34 to 36 (GGH), Asp53, Phe82, Asp103, and Gln110.

It belongs to the methyltransferase superfamily. RsmH family.

Its subcellular location is the cytoplasm. The catalysed reaction is cytidine(1402) in 16S rRNA + S-adenosyl-L-methionine = N(4)-methylcytidine(1402) in 16S rRNA + S-adenosyl-L-homocysteine + H(+). Specifically methylates the N4 position of cytidine in position 1402 (C1402) of 16S rRNA. This Limosilactobacillus reuteri (strain DSM 20016) (Lactobacillus reuteri) protein is Ribosomal RNA small subunit methyltransferase H.